The following is a 246-amino-acid chain: MNHSSNEKEPETIEPLRYLSKTEVATVETELLRDYRFGQQQLIEIWGHACAIAITKAFPLSSLSKKQPTLLVVCGPEQNGSIGLVCARHLRMFEYEPTIFYPKRSTLGLHQDFTVQCEKMDIPFLSYLPTEVQLLNDAYNLVIDAILGPETDHKDVKEPYAGMLVTLKQVKIPIVSVDVPSGWDADEPAKDGINPEVLISLTAPKKCATGFSGKHFLAGRFLPYDIQKKYELNLPEFPGTECIIEL.

The YjeF N-terminal domain occupies 24 to 234 (VATVETELLR…DIQKKYELNL (211 aa)).

As to quaternary structure, interacts with apoa1a. Binds to high-density lipoprotein.

Accelerates cholesterol efflux from endothelial cells to high-density lipoprotein (HDL) and thereby regulates angiogenesis. Orchestrates hematopoietic stem and progenitor cell emergence from the hemogenic endothelium, a type of specialized endothelium manifesting hematopoietic potential. YJEFN3-mediated cholesterol efflux activates endothelial SREBF2, the master transcription factor for cholesterol biosynthesis, which in turn transactivates NOTCH and promotes hematopoietic stem and progenitor cell emergence. In Danio rerio (Zebrafish), this protein is YjeF N-terminal domain-containing 3.